A 151-amino-acid chain; its full sequence is Putative transcriptional regulatory protein TK2151 (151 aa).

Belongs to the Tfx family.

Putative transcriptional regulator. The protein is Putative transcriptional regulatory protein TK2151 of Thermococcus kodakarensis (strain ATCC BAA-918 / JCM 12380 / KOD1) (Pyrococcus kodakaraensis (strain KOD1)).